Here is a 773-residue protein sequence, read N- to C-terminus: Linolenate 9R-lipoxygenase (773 aa).

The Lipoxygenase domain occupies 176–773; it reads YEWVDSKKKS…LEDLMMSINI (598 aa). Fe cation contacts are provided by H515, H520, and I773.

It belongs to the lipoxygenase family.

It carries out the reaction (9Z,12Z,15Z)-octadecatrienoate + O2 = (9R,10E,12Z,15Z)-9-hydroperoxyoctadeca-10,12,15-trienoate. It participates in lipid metabolism; oxylipin biosynthesis. Catalyzes the conversion of alpha-linoleate to (9R,10E,12Z,15Z)-9-hydroperoxyoctadeca-10,12,15-trienoate in oxylipin biosynthesis. Also converts alpha-linoleate to (9R,10E,12Z)-9-hydroperoxyoctadeca-10,12-dienoate. The protein is Linolenate 9R-lipoxygenase of Nostoc sp. (strain PCC 7120 / SAG 25.82 / UTEX 2576).